The following is a 155-amino-acid chain: Acetylaranotin biosynthesis cluster protein L (155 aa).

The protein operates within mycotoxin biosynthesis. Its function is as follows. Nonribosomal peptide synthetase; part of the gene cluster that mediates the biosynthesis of acetylaranotin, a member of the epipolythiodioxopiperazine (ETP) class of toxins characterized by a disulfide-bridged cyclic dipeptide. The first step of acetylaranotin biosynthesis is performed by the NRPS ataP which produces diketopiperazine cyclo-L-Phe-L-Phe via the condensation of 2 phenylalanines (L-Phe). The ataC domain of ataTC then catalyzes the formation of bishydroxylation of cyclo-L-Phe-L-Phe. The glutathione S-transferase domain ataG in ataIMG further catalyzes the conjugation of two glutathiones to the bishydroxylated intermediate. Next, the dipeptidase ataJ removes the Glu residues. The following step is performed by the carbon sulfur lyase domain ataI of ataIMG which may convert the bis-cysteinyl adduct to yield an epidithiol intermediate. The ataT domain from ataTC then catalyzes the oxidation of the free dithiols, followed by a cyclization step catalyzed by the cytochrome P450 ataF. AtaF probably acts as an epoxidase to promote a dual epoxidation formation at C8 and C9 along with C8' and C9', followed by the spontaneous nucleophilic attack of the amide nitrogens N10 and N10' to yield an intermediate with the pyrrolidine partial structure. The final steps of acetylaranotin biosynthesis involve the acetylation and ring rearrangement of an epitetrathiodiketopiperazine intermediate to produce acetylaranotin. AtaH probably catalyzes the acetylation of epitetrathiodiketopiperazine to produce a diacetate and ataY is responsible for the formation of the dihydrooxepin moiety that converts the diacetate intermediate to acetylaranotin via acetylapoaranotin. Both enzymes could function independently in the absence of the other. The specific function of ataL within the pathway has still to be determined. The acetylaranotin bis-thiomethyltransferase ataS located outside of acetylaranotin gene cluster is the main thiomethyltransferase responsible for converting acetylaranotin and its related intermediates to their methylated forms. In Aspergillus terreus (strain NIH 2624 / FGSC A1156), this protein is Acetylaranotin biosynthesis cluster protein L.